The primary structure comprises 34 residues: MSDIN-like toxin proprotein 12 (34 aa).

The propeptide occupies 1–10 (MSDINATRLP). Residues 11 to 19 (HPFPLGLQP) constitute a cross-link (cyclopeptide (His-Pro)). Positions 20-34 (CAGDVDNLTLTKGEG) are excised as a propeptide.

The protein belongs to the MSDIN fungal toxin family. Processed by the macrocyclase-peptidase enzyme POPB to yield a toxic cyclic nonapeptide. POPB first removes 10 residues from the N-terminus. Conformational trapping of the remaining peptide forces the enzyme to release this intermediate rather than proceed to macrocyclization. The enzyme rebinds the remaining peptide in a different conformation and catalyzes macrocyclization of the N-terminal 9 residues.

Probable toxin that belongs to the MSDIN-like toxin family responsible for a large number of food poisoning cases and deaths. The chain is MSDIN-like toxin proprotein 12 from Amanita bisporigera (Destroying angel).